A 3108-amino-acid polypeptide reads, in one-letter code: Probable polyketide synthase 39 (3108 aa).

The region spanning 9–440 is the Ketosynthase family 3 (KS3) domain; it reads DDDVAVIGIG…GSNVCLILSE (432 aa). Residues Cys-181, His-320, and His-363 each act as for beta-ketoacyl synthase activity in the active site. Positions 643–676 are acyl/malonyl transferase; that stretch reads GVSADIIIGHSLGEISSAYCSGMIDFQTLCYLTY. Ser-653 (for acyl/malonyl transferase activity) is an active-site residue. An N-terminal hotdog fold region spans residues 939–1068; that stretch reads HEKIKSEGPS…GNFSLFKHNI (130 aa). Positions 939-1265 constitute a PKS/mFAS DH domain; it reads HEKIKSEGPS…CTIAASNPDS (327 aa). His-980 acts as the Proton acceptor; for dehydratase activity in catalysis. A C-terminal hotdog fold region spans residues 1085-1265; sequence NFTSISKQDL…CTIAASNPDS (181 aa). The Proton donor; for dehydratase activity role is filled by Asp-1157. The interval 1375-1435 is disordered; sequence NNNNNNNNNN…NNNNNNNNNN (61 aa). One can recognise a Carrier domain in the interval 2566–2643; the sequence is GNNEIIHSTI…QSIEIIKSAL (78 aa). Residue Ser-2603 is modified to O-(pantetheine 4'-phosphoryl)serine. Residues 2702–2722 form a helical membrane-spanning segment; it reads IFLTGSTGFLGAYLLMELIKM.

Pantetheine 4'-phosphate serves as cofactor.

It is found in the membrane. Its function is as follows. Probable polyketide synthase. The chain is Probable polyketide synthase 39 (pks39) from Dictyostelium discoideum (Social amoeba).